The following is a 379-amino-acid chain: Oxidoreductase chry3 (379 aa).

Disordered regions lie at residues 1–23 (MTTA…QPTP) and 126–150 (EGDD…TSHM). The segment covering 126–138 (EGDDSAPAEEEAD) has biased composition (acidic residues).

It belongs to the asaB hydroxylase/desaturase family.

Its pathway is pigment biosynthesis. Oxidoreductase; part of the gene cluster that mediates the biosynthesis of the yellow pigment chrysogine. Pyruvic acid and anthranilic acid are likely substrates for the nonribosomal peptide synthetase chry1/NRPS14, with pyruvic acid adenylated by the first A domain and anthranilic acid by the second. If pyruvic acid and anthranilic acid are merged and released from chry1/NRPS14 by hydrolysis, a subsequent amidation would lead to 2-pyruvoylaminobenzamide. This process is probably catalyzed by the amidotransferase chry2 using glutamine as amino donor. The dehydrogenase chry5 that has a terminal berberine bridge domain for C-N cyclization could catalyze the cyclization of 2-pyruvoylaminobenzamide to yield acetyl-4(3H)-quinazolidinone. A final reduction of acetyl-4(3H)-quinazolidinone catalyzed by the oxidoreductase chry4 would result in chrysogine. The chain is Oxidoreductase chry3 from Gibberella zeae (strain ATCC MYA-4620 / CBS 123657 / FGSC 9075 / NRRL 31084 / PH-1) (Wheat head blight fungus).